We begin with the raw amino-acid sequence, 142 residues long: Small ribosomal subunit protein uS9 (142 aa).

Belongs to the universal ribosomal protein uS9 family.

In Debaryomyces hansenii (strain ATCC 36239 / CBS 767 / BCRC 21394 / JCM 1990 / NBRC 0083 / IGC 2968) (Yeast), this protein is Small ribosomal subunit protein uS9 (RPS16).